The primary structure comprises 432 residues: MDVARNGARGSVESPPNRKVYMDYNATTPLEPEVIQAVTEAMKEAWGNPSSSYVAGRKAKDIINTARASLAKMIGGKPQDIIFTSGGTESNNLVIHSTVRCFHEQQTLQGRTVDQISPEEGTRPHFITCTVEHDSIRLPLEHLVEDQVAEVTFVPVSKVNGQVEVEDILAAVRPTTCLVTIMLANNETGVIMPISEISRRIKALNQIRAASGLPRVLVHTDAAQALGKRRVDVEDLGVDFLTIVGHKFYGPRIGALYVRGVGKLTPLYPMLFGGGQERNFRPGTENTPMIAGLGKAADLVSENCETYEAHMRDIRDYLEERLEAEFGKRIHLNSRFPGVERLPNTCNFSIQGSQLRGYMVLAQCQTLLASVGASCHSDHEDRPSPVLLSCGIPVDVARNAVRLSVGRSTTRAEVDLIVQDLKQAVNQLEGPV.

Met-1 carries the post-translational modification N-acetylmethionine. The interval Met-1–Val-20 is disordered. Position 117 is a phosphoserine (Ser-117). The residue at position 247 (Lys-247) is an N6-(pyridoxal phosphate)lysine. Cys-375 functions as the S-selanylcysteine intermediate in the catalytic mechanism.

Belongs to the class-V pyridoxal-phosphate-dependent aminotransferase family. Homodimer. Pyridoxal 5'-phosphate is required as a cofactor.

It is found in the cytoplasm. Its subcellular location is the cytosol. The catalysed reaction is L-selenocysteine + AH2 = hydrogenselenide + L-alanine + A + H(+). Functionally, catalyzes the decomposition of L-selenocysteine to L-alanine and elemental selenium. The sequence is that of Selenocysteine lyase (Scly) from Rattus norvegicus (Rat).